Here is a 610-residue protein sequence, read N- to C-terminus: MKRKLDANDVPSTEANEAEEVKGADRDEDFETLNLDPRLRQALVKEKFSKPTPVQAKAIPLALEGKDILARAKTGSGKTAAYVLPILQTILQKKAIDPSMKATTGLILVPTRELAEQVQKVITTFAAFCGKDVRSVNLTQKVSDAVQKAMLADYPDIVVSTPARVIANLGTSALSLENLTHLVIDEADLVLSYGYEDDINALSKAIPRGVQTFLMSATLTAEVDTLKGLFCRSPVILKLEDKDDHGAGVSQFVVKCAEDEKFLLTYVIFKLQLIKGKVIIFVGDIDRSYRLKLFLEQFGIKSCILNSELPVNSRIHVVEEFNKGVYDIIIAADEQEVLGVSKSRKSKDATEGDDELLSDEDEETSAKAASTRTDKRRKLSSKEKDYGISRGIDFQNVACVLNFDLPTSSKSYTHRIGRTGRGGKTGMALSFVIPADKYGKHKPTSISSAKHDEAVLAKIIKRQAKLGHEVKPYHFDMTQVDAFRYRMSDALRAITRLAIQEARAREIRQELVKSEKLKRHFEENPEELRQLRHDGELRAARIQPHLKHIPEYLMPAKGKKGISNEDVGFVSLRKTGPENRIRKARDRNRGRGKKPGRKIDPLKTFNRGRK.

Positions 1–30 are disordered; the sequence is MKRKLDANDVPSTEANEAEEVKGADRDEDF. Positions 28–56 match the Q motif motif; it reads EDFETLNLDPRLRQALVKEKFSKPTPVQA. A Helicase ATP-binding domain is found at 59–237; the sequence is IPLALEGKDI…GLFCRSPVIL (179 aa). 72–79 contributes to the ATP binding site; sequence AKTGSGKT. The DEAD box signature appears at 185-188; sequence DEAD. In terms of domain architecture, Helicase C-terminal spans 248-478; sequence GVSQFVVKCA…EVKPYHFDMT (231 aa). Disordered stretches follow at residues 349–380 and 569–610; these read ATEGDDELLSDEDEETSAKAASTRTDKRRKLS and FVSL…RGRK. Positions 351–363 are enriched in acidic residues; it reads EGDDELLSDEDEE. Basic residues predominate over residues 582–596; the sequence is RKARDRNRGRGKKPG.

Belongs to the DEAD box helicase family. DDX56/DBP9 subfamily.

It is found in the nucleus. Its subcellular location is the nucleolus. It carries out the reaction ATP + H2O = ADP + phosphate + H(+). ATP-binding RNA helicase involved in the biogenesis of 60S ribosomal subunits and is required for the normal formation of 25S and 5.8S rRNAs. This is ATP-dependent RNA helicase dbp9 (dbp9) from Emericella nidulans (strain FGSC A4 / ATCC 38163 / CBS 112.46 / NRRL 194 / M139) (Aspergillus nidulans).